Consider the following 230-residue polypeptide: Esterase OVCA2 (230 aa).

Residues Ser124, Asp182, and His209 each act as charge relay system in the active site.

The protein belongs to the LovG family.

It catalyses the reaction a carboxylic ester + H2O = an alcohol + a carboxylate + H(+). In terms of biological role, exhibits ester hydrolase activity with a strong preference for long-chain alkyl ester substrates and high selectivity against a variety of short, branched, and substituted esters. Is able to hydrolyze ester bonds within a wide range of p-nitrophenyl derivatives (C2-C14) in vitro, with a strong preference toward substrates of &gt;8 carbons. In Xenopus tropicalis (Western clawed frog), this protein is Esterase OVCA2 (ovca2).